Here is a 514-residue protein sequence, read N- to C-terminus: Triacylglyceride transporter MAB_2807 (514 aa).

Helical transmembrane passes span 19 to 39 (IAIG…YVVV), 58 to 78 (QVTP…PLLG), 88 to 108 (LILQ…ALST), 118 to 138 (VIQG…GADL), 157 to 177 (LGSV…GSWT), 178 to 198 (AIFW…QFSV), 210 to 230 (VDVV…VGLY), 239 to 259 (LPEW…AFIL), 278 to 298 (PFFA…VTLV), 316 to 336 (VFLL…GGWL), and 344 to 364 (IIAV…SGWP). Residues 371 to 380 (VHNFGFFTLP) are beta-hairpin. A run of 3 helical transmembrane segments spans residues 385 to 405 (DLVV…SAAL), 420 to 440 (VVVA…GWGI), and 485 to 505 (MFAI…FVGS).

This sequence belongs to the major facilitator superfamily. P55 (TC 2.A.1.3.34) family.

The protein resides in the cell inner membrane. In terms of biological role, in association with lipoprotein LprG probably transports triacyglycerides (TAG) across the inner cell membrane into the periplasm; TAG probably regulates lipid metabolism and growth regulation and plays a structural role in the outer membrane. TAG (and maybe other lipids) enters the central cavity of the P55 transporter from within the cell inner membrane via clefts on the cytoplasmic face of P55 between TM5-TM8 and TM2-TM11. From there the lipid is probably transferred to the hydrophobic cavity of LprG. Involved in drug susceptibilty, its expression partially complements the antibiotic susceptibilty of a double lprG-mfs deletion. Probably does not function as a bona fide drug efflux pump, but instead plays a role in outer membrane biogenesis. Probably required with LprG for normal surface localization of lipoarabinomannan (LAM). This is Triacylglyceride transporter MAB_2807 from Mycobacteroides abscessus (strain ATCC 19977 / DSM 44196 / CCUG 20993 / CIP 104536 / JCM 13569 / NCTC 13031 / TMC 1543 / L948) (Mycobacterium abscessus).